We begin with the raw amino-acid sequence, 320 residues long: Phosphoribosylaminoimidazole-succinocarboxamide synthase (320 aa).

Positions 283-303 are disordered; it reads ESDWDRNSPPPPLPESIAHQT.

The protein belongs to the SAICAR synthetase family.

It catalyses the reaction 5-amino-1-(5-phospho-D-ribosyl)imidazole-4-carboxylate + L-aspartate + ATP = (2S)-2-[5-amino-1-(5-phospho-beta-D-ribosyl)imidazole-4-carboxamido]succinate + ADP + phosphate + 2 H(+). It functions in the pathway purine metabolism; IMP biosynthesis via de novo pathway; 5-amino-1-(5-phospho-D-ribosyl)imidazole-4-carboxamide from 5-amino-1-(5-phospho-D-ribosyl)imidazole-4-carboxylate: step 1/2. This is Phosphoribosylaminoimidazole-succinocarboxamide synthase from Rhodopirellula baltica (strain DSM 10527 / NCIMB 13988 / SH1).